Consider the following 239-residue polypeptide: Prolyl hydroxylase EGLN3 (239 aa).

The segment at 62-73 is beta(2)beta(3) 'finger-like' loop; sequence AGPRAGVSKRHL. The interval 88–104 is required for interaction with ADRB2; it reads CEAINFLLSLIDRLVLY. The 99-residue stretch at 116 to 214 folds into the Fe2OG dioxygenase domain; the sequence is ERSKAMVACY…RYAMTVWYFD (99 aa). Fe cation is bound by residues His135, Asp137, and His196. Arg205 lines the 2-oxoglutarate pocket.

As to quaternary structure, interacts with ADRB2; the interaction hydroxylates ADRB2 facilitating its ubiquitination by the VHL-E3 ligase complex. Interacts with PAX2; the interaction targets PAX2 for destruction. Interacts with PKM; the interaction hydroxylates PKM in hypoxia. Interacts with WDR83; the interaction leads to almost complete elimination of HIF-mediated reporter activity. Interacts with BCL2 (via its BH4 domain); the interaction disrupts the BAX-BCL4 complex inhibiting the anti-apoptotic activity of BCL2. It depends on Fe(2+) as a cofactor. L-ascorbate serves as cofactor. Ubiquitinated by SIAH1 and/or SIAH2 in response to the unfolded protein response (UPR), leading to its degradation. In terms of tissue distribution, highly expressed in vascular smooth muscle. Moderately expressed in esophagus, stomach, small bowel and aorta. Low levels in tail and kidney. Expression also in pheochromocytoma cell line PC-12.

Its subcellular location is the nucleus. The protein resides in the cytoplasm. It catalyses the reaction L-prolyl-[protein] + 2-oxoglutarate + O2 = trans-4-hydroxy-L-prolyl-[protein] + succinate + CO2. The enzyme catalyses L-prolyl-[hypoxia-inducible factor alpha subunit] + 2-oxoglutarate + O2 = trans-4-hydroxy-L-prolyl-[hypoxia-inducible factor alpha subunit] + succinate + CO2. Functionally, prolyl hydroxylase that mediates hydroxylation of proline residues in target proteins, such as PKM, TELO2, ATF4 and HIF1A. Target proteins are preferentially recognized via a LXXLAP motif. Cellular oxygen sensor that catalyzes, under normoxic conditions, the post-translational formation of 4-hydroxyproline in hypoxia-inducible factor (HIF) alpha proteins. Hydroxylates a specific proline found in each of the oxygen-dependent degradation (ODD) domains (N-terminal, NODD, and C-terminal, CODD) of HIF1A. Also hydroxylates HIF2A. Has a preference for the CODD site for both HIF1A and HIF2A. Hydroxylation on the NODD site by EGLN3 appears to require prior hydroxylation on the CODD site. Hydroxylated HIFs are then targeted for proteasomal degradation via the von Hippel-Lindau ubiquitination complex. Under hypoxic conditions, the hydroxylation reaction is attenuated allowing HIFs to escape degradation resulting in their translocation to the nucleus, heterodimerization with HIF1B, and increased expression of hypoxy-inducible genes. ELGN3 is the most important isozyme in limiting physiological activation of HIFs (particularly HIF2A) in hypoxia. Also hydroxylates PKM in hypoxia, limiting glycolysis. Under normoxia, hydroxylates and regulates the stability of ADRB2. Regulator of cardiomyocyte and neuronal apoptosis. In cardiomyocytes, inhibits the anti-apoptotic effect of BCL2 by disrupting the BAX-BCL2 complex. In neurons, has a NGF-induced proapoptotic effect, probably through regulating CASP3 activity. Also essential for hypoxic regulation of neutrophilic inflammation. Plays a crucial role in DNA damage response (DDR) by hydroxylating TELO2, promoting its interaction with ATR which is required for activation of the ATR/CHK1/p53 pathway. Also mediates hydroxylation of ATF4, leading to decreased protein stability of ATF4. This is Prolyl hydroxylase EGLN3 (Egln3) from Rattus norvegicus (Rat).